We begin with the raw amino-acid sequence, 191 residues long: Hypoxanthine/guanine phosphoribosyltransferase (191 aa).

This sequence belongs to the purine/pyrimidine phosphoribosyltransferase family. Archaeal HPRT subfamily. Homodimer.

Its subcellular location is the cytoplasm. The enzyme catalyses IMP + diphosphate = hypoxanthine + 5-phospho-alpha-D-ribose 1-diphosphate. It carries out the reaction GMP + diphosphate = guanine + 5-phospho-alpha-D-ribose 1-diphosphate. It functions in the pathway purine metabolism; IMP biosynthesis via salvage pathway; IMP from hypoxanthine: step 1/1. Catalyzes a salvage reaction resulting in the formation of IMP that is energically less costly than de novo synthesis. In Methanocella paludicola (strain DSM 17711 / JCM 13418 / NBRC 101707 / SANAE), this protein is Hypoxanthine/guanine phosphoribosyltransferase.